The following is a 389-amino-acid chain: MTTSVSLLGASGSVGESTLRVLRAYPQEFRLHSFSVHSNLEKAREIQKEFSPEFLCVSDSTADRTVLGNKIGKTQVLYGESALCELVREPEVQIVITAIVGSVGLRPTIAAITSGKRLGIANKETLVTFGPLVNSLIAKHKTKVVPVDSEHNALFQLLESLNRDSVEKIVLTASGGSFRDLSVEQLAYVTKEQALHHPTWNMGPKITVDSNGMINKGLEVIEAHFLFGVPYERIGVVIHPQSIAHGIVELKDGASFVYASYPDMIFPIAHSLFHPEPVPKSLRSYSAKDWGKLEFWEPDLKRYPGLGLAFEAGKAGGTAPCIFNAANEAAVELFLKDEIRFTEIPDYIWYTLDEMPIDFPTSLEEYEEVDRIARKTVLNLKARKVVSAC.

6 residues coordinate NADPH: Ser-11, Gly-12, Ser-13, Val-14, Asn-39, and Asn-122. 1-deoxy-D-xylulose 5-phosphate is bound at residue Lys-123. Glu-124 serves as a coordination point for NADPH. Position 148 (Asp-148) interacts with Mn(2+). Ser-149, Glu-150, Ser-174, and His-197 together coordinate 1-deoxy-D-xylulose 5-phosphate. Residue Glu-150 coordinates Mn(2+). Residue Gly-203 coordinates NADPH. 1-deoxy-D-xylulose 5-phosphate-binding residues include Ser-210, Asn-215, Lys-216, and Glu-219. A Mn(2+)-binding site is contributed by Glu-219.

The protein belongs to the DXR family. Mg(2+) is required as a cofactor. Mn(2+) serves as cofactor.

It carries out the reaction 2-C-methyl-D-erythritol 4-phosphate + NADP(+) = 1-deoxy-D-xylulose 5-phosphate + NADPH + H(+). The protein operates within isoprenoid biosynthesis; isopentenyl diphosphate biosynthesis via DXP pathway; isopentenyl diphosphate from 1-deoxy-D-xylulose 5-phosphate: step 1/6. In terms of biological role, catalyzes the NADPH-dependent rearrangement and reduction of 1-deoxy-D-xylulose-5-phosphate (DXP) to 2-C-methyl-D-erythritol 4-phosphate (MEP). This chain is 1-deoxy-D-xylulose 5-phosphate reductoisomerase, found in Leptospira borgpetersenii serovar Hardjo-bovis (strain JB197).